The sequence spans 794 residues: Cilia- and flagella-associated protein 184 (794 aa).

2 disordered regions span residues 1–105 (MASE…VNSE) and 386–458 (AHEE…QQDT). The span at 24 to 35 (QMQQYMMEMQRQ) shows a compositional bias: low complexity. Residues 49 to 69 (EGYEEGQEGEGYGEEYGDQDY) show a composition bias toward acidic residues. Basic and acidic residues-rich tracts occupy residues 89 to 103 (QVNE…RRVN), 386 to 411 (AHEE…KDYG), and 431 to 445 (ISDK…HAEQ). Positions 446–456 (EQNQQAAQQQQ) are enriched in low complexity. Coiled-coil stretches lie at residues 461–613 (NKEI…LRLR) and 638–775 (FEQL…ANQI). Residues 774-787 (QISTQNMQSQNNSL) are compositionally biased toward polar residues. Positions 774–794 (QISTQNMQSQNNSLKKPYQPY) are disordered.

It belongs to the CFAP184 family. In terms of assembly, forms a complex with CFAP263; the interaction is required for functional activity in cilia.

The protein localises to the cell projection. It localises to the cilium. Functionally, in complex with CFAP263, acts as a regulator of ciliary beating that connects radial spoke 3 (RS3) to the inner dynein arm (IDA) and the nexin-dynein regulatory complex (N-DRC). The complex is positioned parallel to N-DRC and forms a connection between the arch at the base of RS3, the IDA tail and N-DRC. The protein is Cilia- and flagella-associated protein 184 (CFAP184) of Tetrahymena thermophila (strain SB210).